We begin with the raw amino-acid sequence, 87 residues long: Large ribosomal subunit protein bL31B (87 aa).

Belongs to the bacterial ribosomal protein bL31 family. Type B subfamily. Part of the 50S ribosomal subunit.

The chain is Large ribosomal subunit protein bL31B from Pseudomonas paraeruginosa (strain DSM 24068 / PA7) (Pseudomonas aeruginosa (strain PA7)).